We begin with the raw amino-acid sequence, 194 residues long: Ribonuclease VapC1 (194 aa).

In terms of domain architecture, PINc spans 34 to 134; that stretch reads YVIDTSAIIS…TDDYSIQNVA (101 aa). Asp-37 and Asp-150 together coordinate Mg(2+).

This sequence belongs to the PINc/VapC protein family. Mg(2+) serves as cofactor.

In terms of biological role, toxic component of a type II toxin-antitoxin (TA) system. An RNase. The polypeptide is Ribonuclease VapC1 (Thermoplasma acidophilum (strain ATCC 25905 / DSM 1728 / JCM 9062 / NBRC 15155 / AMRC-C165)).